The primary structure comprises 459 residues: Heat stress transcription factor A-4d (459 aa).

Positions 127-189 (AESERRELEE…QKNIVASLCE (63 aa)) form a coiled coil. The interval 141 to 191 (LKYEKSILVADLQRQNQQQYVINWQMQAMEGRLVAMEQRQKNIVASLCEML) is hydrophobic repeat HR-A/B. The Nuclear localization signal motif lies at 209 to 213 (SKKRR). Residues 364–388 (YPTQADVNSEIASSTDTSQDGTSET) are compositionally biased toward polar residues. Residues 364–398 (YPTQADVNSEIASSTDTSQDGTSETEASHGPTNDV) are disordered. An AHA motif is present at residues 397–406 (DVFWERFLTE).

This sequence belongs to the HSF family. Class A subfamily. In terms of assembly, homotrimer. Exhibits temperature-dependent phosphorylation.

The protein localises to the nucleus. Its function is as follows. Transcriptional regulator that specifically binds DNA of heat shock promoter elements (HSE). The chain is Heat stress transcription factor A-4d (HSFA4D) from Oryza sativa subsp. japonica (Rice).